Here is a 196-residue protein sequence, read N- to C-terminus: tRNA(Phe) 7-((3-amino-3-carboxypropyl)-4-demethylwyosine(37)-N(4))-methyltransferase (196 aa).

The protein belongs to the TYW3 family.

It catalyses the reaction 4-demethyl-7-[(3S)-3-amino-3-carboxypropyl]wyosine(37) in tRNA(Phe) + S-adenosyl-L-methionine = 7-[(3S)-3-amino-3-carboxypropyl]wyosine(37) in tRNA(Phe) + S-adenosyl-L-homocysteine + H(+). In terms of biological role, S-adenosyl-L-methionine-dependent methyltransferase that acts as a component of the wyosine derivatives biosynthesis pathway. Probably methylates N-4 position of wybutosine-86 to produce wybutosine-72. This Archaeoglobus fulgidus (strain ATCC 49558 / DSM 4304 / JCM 9628 / NBRC 100126 / VC-16) protein is tRNA(Phe) 7-((3-amino-3-carboxypropyl)-4-demethylwyosine(37)-N(4))-methyltransferase.